Here is a 449-residue protein sequence, read N- to C-terminus: Pectate lyase L (449 aa).

Residues 1–26 (MFKRNDRSKNGFNALRLGVSFVLASS) form the signal peptide. C27 is lipidated: N-palmitoyl cysteine. C27 is lipidated: S-diacylglycerol cysteine. PbH1 repeat units follow at residues 158–179 (GDFWLVKGLEVKGAGDNGIYIG), 180–202 (GSNNRIENVETHHNRDTGLQLGR), 213–242 (PANNLILNSYSHDNADPDNGEDADGFAAKL), 245–267 (GSGNVFDNCLAAYNVDDGWDLYS), 274–308 (IGAVTILNSVAHHNGQTSDGTSTANSDGNGFKLGG), 336–358 (PGTITLTNNTSWDNGQSNFAFDK), and 359–391 (GEHVFINNLSFEGTASDKTSGTDQDNSNVWWKN). The Ca(2+) site is built by D236, D260, D261, and D264. K305 functions as the Proton acceptor in the catalytic mechanism.

It belongs to the polysaccharide lyase 9 family. Ca(2+) serves as cofactor.

The protein resides in the secreted. It catalyses the reaction Eliminative cleavage of (1-&gt;4)-alpha-D-galacturonan to give oligosaccharides with 4-deoxy-alpha-D-galact-4-enuronosyl groups at their non-reducing ends.. With respect to regulation, activated in presence of the surfactant polysorbate 20, while inhibited in the presence of polysorbate 40, polysorbate 60, polysorbate 80, Triton X-100 and sodium dodecyl sulfate. Inhibited by the metal chelator ethylenediaminetetraacetic acid (EDTA). Inhibited by iron and cobalt ions. Presents an endo-cleaving activity on the homogalacturonan (HG) region in pectin with a preference for low- or unmethylated pectin. This chain is Pectate lyase L, found in Paenibacillus polymyxa (strain SC2) (Bacillus polymyxa).